Consider the following 200-residue polypeptide: 3-isopropylmalate dehydratase small subunit (200 aa).

It belongs to the LeuD family. LeuD type 1 subfamily. As to quaternary structure, heterodimer of LeuC and LeuD.

It carries out the reaction (2R,3S)-3-isopropylmalate = (2S)-2-isopropylmalate. Its pathway is amino-acid biosynthesis; L-leucine biosynthesis; L-leucine from 3-methyl-2-oxobutanoate: step 2/4. Catalyzes the isomerization between 2-isopropylmalate and 3-isopropylmalate, via the formation of 2-isopropylmaleate. This chain is 3-isopropylmalate dehydratase small subunit, found in Actinobacillus succinogenes (strain ATCC 55618 / DSM 22257 / CCUG 43843 / 130Z).